The sequence spans 99 residues: C-C motif chemokine 17 (99 aa).

A signal peptide spans 1–23 (MMSLKLLLLVMLLLGASLQVTHA). Intrachain disulfides connect C33–C57 and C34–C73.

Belongs to the intercrine beta (chemokine CC) family. In terms of tissue distribution, expressed in thymus and also in spleen, lung, lymph node, kidney, small intestine, colon and skin.

It localises to the secreted. In terms of biological role, chemokine, which displays chemotactic activity for T lymphocytes, preferentially Th2 cells, but not monocytes or granulocytes. Therefore plays an important role in a wide range of inflammatory and immunological processes. Acts by binding to CCR4 at T-cell surface. Mediates GM-CSF/CSF2-driven pain and inflammation. In the brain, required to maintain the typical, highly branched morphology of hippocampal microglia under homeostatic conditions. May be important for the appropriate adaptation of microglial morphology and synaptic plasticity to acute lipopolysaccharide (LPS)-induced neuroinflammation. Plays a role in wound healing, mainly by inducing fibroblast migration into the wound. In Felis catus (Cat), this protein is C-C motif chemokine 17 (CCL17).